The primary structure comprises 131 residues: MTTKRKPYVRPMTSTWWKKLPFYRFYMVREGTAVPTVWFSIVLIYGLFALKHGAESWAGYIGFLQNPVVVILNLITLAAALLHTKTWFELAPKAANVIIKGEKMGPEPVIKGLWVVTAVVTVVILFVALFW.

3 helical membrane-spanning segments follow: residues Glu-30 to Leu-50, Ile-61 to Leu-81, and Ile-110 to Phe-130.

This sequence belongs to the FrdC family. As to quaternary structure, part of an enzyme complex containing four subunits: a flavoprotein (FrdA), an iron-sulfur protein (FrdB), and two hydrophobic anchor proteins (FrdC and FrdD).

It is found in the cell inner membrane. Functionally, two distinct, membrane-bound, FAD-containing enzymes are responsible for the catalysis of fumarate and succinate interconversion; fumarate reductase is used in anaerobic growth, and succinate dehydrogenase is used in aerobic growth. Anchors the catalytic components of the fumarate reductase complex to the cell inner membrane, binds quinones. The polypeptide is Fumarate reductase subunit C (Klebsiella pneumoniae (strain 342)).